A 212-amino-acid chain; its full sequence is uncharacterized protein (212 aa).

Positions 1-18 (MIPLVALLVLLTLQASPG) are cleaved as a signal peptide. Residues 186–208 (IYRLATFFMVSLFVGSFVALVFV) form a helical membrane-spanning segment.

It to A.fulgidus AF_0540.

The protein resides in the membrane. This is an uncharacterized protein from Archaeoglobus fulgidus (strain ATCC 49558 / DSM 4304 / JCM 9628 / NBRC 100126 / VC-16).